The chain runs to 158 residues: Salt stress-responsive protein YocM (158 aa).

The 108-residue stretch at 51–158 (GKGDASFPSM…GQAKTIVIDD (108 aa)) folds into the sHSP domain.

It belongs to the small heat shock protein (HSP20) family. As to quaternary structure, forms homodimers, homotetramers and higher oligomers.

It is found in the cytoplasm. Part of the cellular protein quality control system with a specific role in salt stress response. May facilitate protein homeostasis, together with chemical chaperones that accumulate during the salt stress response. Increased levels of YocM protects against both heat and salt stress. In vitro, displays an unusual aggregase chaperone activity. This is Salt stress-responsive protein YocM (yocM) from Bacillus subtilis (strain 168).